A 742-amino-acid chain; its full sequence is Alcohol dehydrogenase (quinone), dehydrogenase subunit (742 aa).

Residues 1–35 (MTRPASAKRRSLLGILAAGTICAAALPYAAVPARA) form the signal peptide. Residue E96 participates in pyrroloquinoline quinone binding. The cysteines at positions 142 and 143 are disulfide-linked. R148 serves as a coordination point for pyrroloquinoline quinone. E216 is a binding site for Ca(2+). T278 lines the pyrroloquinoline quinone pocket. 2 residues coordinate Ca(2+): N298 and D343. D343 serves as the catalytic Proton acceptor. Residues K370 and I584 each contribute to the pyrroloquinoline quinone site. The region spanning 636–715 (KVVDNGYFQY…AIRQYLIKRA (80 aa)) is the Cytochrome c domain. 4 residues coordinate heme c: C649, C652, H653, and M692. The segment covering 722 to 732 (EVDARKNDKNI) has biased composition (basic and acidic residues). Residues 722-742 (EVDARKNDKNIPENPTLGINP) form a disordered region.

Belongs to the bacterial PQQ dehydrogenase family. The alcohol dehydrogenase multicomponent enzyme system is composed of a dehydrogenase subunit I (AdhA) and a cytochrome c subunit II (AdhB). Pyrroloquinoline quinone is required as a cofactor. Requires Ca(2+) as cofactor. Heme c serves as cofactor.

The protein resides in the cell membrane. The enzyme catalyses ethanol + a ubiquinone = a ubiquinol + acetaldehyde. Dehydrogenase component of the alcohol dehydrogenase multicomponent enzyme system which is involved in the production of acetic acid and in the ethanol oxidase respiratory chain. Quinohemoprotein alcohol dehydrogenase (ADH) catalyzes the oxidation of ethanol to acetaldehyde by transferring electrons to the ubiquinone embedded in the membrane phospholipids. The electrons transfer from ethanol to membranous ubiquinone occurs from pyrroloquinoline quinone (PQQ) to one heme c in subunit I (AdhA), and finally to two heme c in subunit II (AdhB). Besides ubiquinone reduction, ADH also has a ubiquinol (QH2) oxidation reaction which mediates electron transfer from ubiquinol to the non-energy generating bypass oxidase system. The electrons transfer occurs from ubiquinol (QH2) to the additional heme c within subunit II (AdhB). The polypeptide is Alcohol dehydrogenase (quinone), dehydrogenase subunit (Acetobacter aceti).